The following is a 68-amino-acid chain: Metallothionein-3 (68 aa).

Residue Met1 is modified to N-acetylmethionine. Residues 1-30 (MDPETCPCPSGGSCTCADSCKCEGCKCTSC) form a beta region. Positions 6, 8, 14, 16, 20, 22, 25, 27, and 30 each coordinate a divalent metal cation. The tract at residues 31-68 (KKSCCSCCPAECEKCAKDCVCKGGEGAEAEAEKCSCCE) is alpha. Position 33 is a phosphoserine (Ser33). A divalent metal cation is bound by residues Cys34, Cys35, Cys37, Cys38, Cys42, Cys45, Cys49, Cys51, Cys64, Cys66, and Cys67.

This sequence belongs to the metallothionein superfamily. Type 1 family.

Functionally, binds heavy metals. Contains five zinc and one copper atoms per polypeptide chain and only a negligible amount of cadmium. The sequence is that of Metallothionein-3 (MT3) from Macaca fascicularis (Crab-eating macaque).